We begin with the raw amino-acid sequence, 284 residues long: MAFGKSKNRRRQDAAQQKEAVRGAVRSQGPRALKVLGLTLGTGLLVWGGAALREWTLTSPRFELEAVSFSGLQRASRVELLRLAALTKGQNLWTLDVDALERAMDQHPWLRTVEVTRRFPNRVSVEVTEHTPVAMAVLGELYVLDEEGEPFKRVTPGDGLDLPLVTGLDREGYVADPAAARERLRSALAVASAYARLSPDQAEQLSEVRLEAQSLALVTASGQEVRLGEGDSEVKLQRLARVRRELGARGLAAEIIHLDNRARPGWVAVKISSPASERSGASMR.

Over residues 1 to 10 (MAFGKSKNRR) the composition is skewed to basic residues. Positions 1-23 (MAFGKSKNRRRQDAAQQKEAVRG) are disordered. Over 1 to 34 (MAFGKSKNRRRQDAAQQKEAVRGAVRSQGPRALK) the chain is Cytoplasmic. A helical transmembrane segment spans residues 35–52 (VLGLTLGTGLLVWGGAAL). The Periplasmic segment spans residues 53-284 (REWTLTSPRF…ASERSGASMR (232 aa)). The POTRA domain occupies 62–130 (FELEAVSFSG…NRVSVEVTEH (69 aa)).

It belongs to the FtsQ/DivIB family. FtsQ subfamily.

The protein resides in the cell inner membrane. In terms of biological role, essential cell division protein. The sequence is that of Cell division protein FtsQ from Myxococcus fulvus (strain ATCC BAA-855 / HW-1).